We begin with the raw amino-acid sequence, 91 residues long: MSETTEINPAARRTAVGARRPFYRRRKSCPFSGPNAPKIDYKDVRLLSRFLSERGKIVPSRITAVSAKKQRELAQAIKRARFMALLPYIVG.

The protein belongs to the bacterial ribosomal protein bS18 family. In terms of assembly, part of the 30S ribosomal subunit. Forms a tight heterodimer with protein bS6.

Functionally, binds as a heterodimer with protein bS6 to the central domain of the 16S rRNA, where it helps stabilize the platform of the 30S subunit. This chain is Small ribosomal subunit protein bS18, found in Gluconacetobacter diazotrophicus (strain ATCC 49037 / DSM 5601 / CCUG 37298 / CIP 103539 / LMG 7603 / PAl5).